A 448-amino-acid polypeptide reads, in one-letter code: F-box/FBD/LRR-repeat protein At2g04230 (448 aa).

One can recognise an F-box domain in the interval 12–64; the sequence is EDRISDLPDALLLQILSSLPTENAIATSVLSKRWRSLWTMLPKLKFDSNFNPV. LRR repeat units follow at residues 72-98, 149-176, 177-202, 204-225, 226-251, 271-296, and 319-345; these read PTMF…HLSF, ILKL…YLDQ, VHFK…VVHR, SNAD…TIED, LRQE…NING, ISNV…ILHL, and THER…KLTD. An FBD domain is found at 359-410; that stretch reads KWNPPKCAPECLLFHLETFLWIGYEWQRGDEKEVATYILENARRLKKATFST.

The polypeptide is F-box/FBD/LRR-repeat protein At2g04230 (Arabidopsis thaliana (Mouse-ear cress)).